We begin with the raw amino-acid sequence, 214 residues long: Probable transaldolase (214 aa).

The active-site Schiff-base intermediate with substrate is K83.

This sequence belongs to the transaldolase family. Type 3B subfamily.

Its subcellular location is the cytoplasm. It catalyses the reaction D-sedoheptulose 7-phosphate + D-glyceraldehyde 3-phosphate = D-erythrose 4-phosphate + beta-D-fructose 6-phosphate. It participates in carbohydrate degradation; pentose phosphate pathway; D-glyceraldehyde 3-phosphate and beta-D-fructose 6-phosphate from D-ribose 5-phosphate and D-xylulose 5-phosphate (non-oxidative stage): step 2/3. Functionally, transaldolase is important for the balance of metabolites in the pentose-phosphate pathway. In Streptococcus equi subsp. zooepidemicus (strain MGCS10565), this protein is Probable transaldolase.